The chain runs to 146 residues: Acidic phospholipase A2 D (146 aa).

The first 21 residues, 1–21 (MNPAHLLILAAVCVSPLGASS), serve as a signal peptide directing secretion. Residues 22–27 (NRPMPL) constitute a propeptide that is removed on maturation. 7 disulfide bridges follow: Cys38/Cys98, Cys53/Cys145, Cys55/Cys71, Cys70/Cys126, Cys77/Cys119, Cys87/Cys112, and Cys105/Cys117. 3 residues coordinate Ca(2+): Tyr54, Gly56, and Gly58. His74 is an active-site residue. Asp75 is a Ca(2+) binding site. Asp120 is an active-site residue.

The protein belongs to the phospholipase A2 family. Group I subfamily. D49 sub-subfamily. It depends on Ca(2+) as a cofactor. In terms of tissue distribution, expressed by the venom gland.

It localises to the secreted. It catalyses the reaction a 1,2-diacyl-sn-glycero-3-phosphocholine + H2O = a 1-acyl-sn-glycero-3-phosphocholine + a fatty acid + H(+). PLA2 catalyzes the calcium-dependent hydrolysis of the 2-acyl groups in 3-sn-phosphoglycerides. In Naja sputatrix (Malayan spitting cobra), this protein is Acidic phospholipase A2 D.